The chain runs to 140 residues: Nucleoside diphosphate kinase (140 aa).

ATP-binding residues include Lys11, Phe59, Arg87, Thr93, Arg104, and Asn114. His117 acts as the Pros-phosphohistidine intermediate in catalysis.

Belongs to the NDK family. Homotetramer. It depends on Mg(2+) as a cofactor.

It is found in the cytoplasm. It carries out the reaction a 2'-deoxyribonucleoside 5'-diphosphate + ATP = a 2'-deoxyribonucleoside 5'-triphosphate + ADP. The enzyme catalyses a ribonucleoside 5'-diphosphate + ATP = a ribonucleoside 5'-triphosphate + ADP. Its function is as follows. Major role in the synthesis of nucleoside triphosphates other than ATP. The ATP gamma phosphate is transferred to the NDP beta phosphate via a ping-pong mechanism, using a phosphorylated active-site intermediate. The protein is Nucleoside diphosphate kinase of Rhodopseudomonas palustris (strain BisA53).